Reading from the N-terminus, the 245-residue chain is tRNA1(Val) (adenine(37)-N6)-methyltransferase (245 aa).

This sequence belongs to the methyltransferase superfamily. tRNA (adenine-N(6)-)-methyltransferase family.

The protein localises to the cytoplasm. The catalysed reaction is adenosine(37) in tRNA1(Val) + S-adenosyl-L-methionine = N(6)-methyladenosine(37) in tRNA1(Val) + S-adenosyl-L-homocysteine + H(+). Its function is as follows. Specifically methylates the adenine in position 37 of tRNA(1)(Val) (anticodon cmo5UAC). The chain is tRNA1(Val) (adenine(37)-N6)-methyltransferase (yfiC) from Escherichia coli (strain K12).